Consider the following 189-residue polypeptide: Shikimate kinase (189 aa).

Residue 11 to 16 participates in ATP binding; the sequence is GTGKSA. Ser15 is a Mg(2+) binding site. Asp33, Arg57, and Gly79 together coordinate substrate. Arg117 lines the ATP pocket. Residue Arg135 participates in substrate binding.

Belongs to the shikimate kinase family. As to quaternary structure, monomer. The cofactor is Mg(2+).

It localises to the cytoplasm. The enzyme catalyses shikimate + ATP = 3-phosphoshikimate + ADP + H(+). The protein operates within metabolic intermediate biosynthesis; chorismate biosynthesis; chorismate from D-erythrose 4-phosphate and phosphoenolpyruvate: step 5/7. Its function is as follows. Catalyzes the specific phosphorylation of the 3-hydroxyl group of shikimic acid using ATP as a cosubstrate. This Desulforudis audaxviator (strain MP104C) protein is Shikimate kinase.